A 479-amino-acid chain; its full sequence is Ribulose bisphosphate carboxylase large chain (479 aa).

Positions 1–2 (MS) are excised as a propeptide. The substrate site is built by Asn123 and Thr173. Catalysis depends on Lys175, which acts as the Proton acceptor. Lys177 contributes to the substrate binding site. Residues Lys201, Asp203, and Glu204 each coordinate Mg(2+). Lys201 is subject to N6-carboxylysine. At Ser208 the chain carries Phosphoserine. The Proton acceptor role is filled by His294. Arg295 and His327 together coordinate substrate. Residue Thr330 is modified to Phosphothreonine. Ser379 contributes to the substrate binding site.

Belongs to the RuBisCO large chain family. Type I subfamily. In terms of assembly, heterohexadecamer of 8 large chains and 8 small chains; disulfide-linked. The disulfide link is formed within the large subunit homodimers. Mg(2+) serves as cofactor. Post-translationally, the disulfide bond which can form in the large chain dimeric partners within the hexadecamer appears to be associated with oxidative stress and protein turnover.

The protein resides in the plastid. It localises to the chloroplast. It carries out the reaction 2 (2R)-3-phosphoglycerate + 2 H(+) = D-ribulose 1,5-bisphosphate + CO2 + H2O. The catalysed reaction is D-ribulose 1,5-bisphosphate + O2 = 2-phosphoglycolate + (2R)-3-phosphoglycerate + 2 H(+). Functionally, ruBisCO catalyzes two reactions: the carboxylation of D-ribulose 1,5-bisphosphate, the primary event in carbon dioxide fixation, as well as the oxidative fragmentation of the pentose substrate in the photorespiration process. Both reactions occur simultaneously and in competition at the same active site. This chain is Ribulose bisphosphate carboxylase large chain, found in Draba nemorosa (Woodland whitlowgrass).